Reading from the N-terminus, the 196-residue chain is GTP cyclohydrolase-2 (196 aa).

GTP is bound at residue 49-53; it reads RVHSE. The Zn(2+) site is built by Cys-54, Cys-65, and Cys-67. GTP-binding positions include Gln-70, 92-94, and Thr-114; that span reads EGR. Asp-126 functions as the Proton acceptor in the catalytic mechanism. Catalysis depends on Arg-128, which acts as the Nucleophile. GTP contacts are provided by Thr-149 and Lys-154.

Belongs to the GTP cyclohydrolase II family. In terms of assembly, homodimer. The cofactor is Zn(2+).

The catalysed reaction is GTP + 4 H2O = 2,5-diamino-6-hydroxy-4-(5-phosphoribosylamino)-pyrimidine + formate + 2 phosphate + 3 H(+). Its pathway is cofactor biosynthesis; riboflavin biosynthesis; 5-amino-6-(D-ribitylamino)uracil from GTP: step 1/4. In terms of biological role, catalyzes the conversion of GTP to 2,5-diamino-6-ribosylamino-4(3H)-pyrimidinone 5'-phosphate (DARP), formate and pyrophosphate. The polypeptide is GTP cyclohydrolase-2 (Citrobacter koseri (strain ATCC BAA-895 / CDC 4225-83 / SGSC4696)).